Here is a 207-residue protein sequence, read N- to C-terminus: Protein FMP32, mitochondrial (207 aa).

Positions 100–136 form a coiled coil; it reads ADRSEFHNIQNEYESVKNDLEKLRNKLREEITKTNAG. The chain crosses the membrane as a helical span at residues 184-206; the sequence is VMQWLIGVCTGTFALVLAYMRLL.

Belongs to the CCDC90 family.

The protein resides in the mitochondrion. Its subcellular location is the membrane. The protein is Protein FMP32, mitochondrial (FMP32) of Saccharomyces cerevisiae (strain ATCC 204508 / S288c) (Baker's yeast).